We begin with the raw amino-acid sequence, 283 residues long: Probable endonuclease 4 (283 aa).

9 residues coordinate Zn(2+): His-66, His-106, Glu-141, Asp-174, His-177, His-211, Asp-224, His-226, and Glu-256.

This sequence belongs to the AP endonuclease 2 family. The cofactor is Zn(2+).

The catalysed reaction is Endonucleolytic cleavage to 5'-phosphooligonucleotide end-products.. Endonuclease IV plays a role in DNA repair. It cleaves phosphodiester bonds at apurinic or apyrimidinic (AP) sites, generating a 3'-hydroxyl group and a 5'-terminal sugar phosphate. The protein is Probable endonuclease 4 of Carboxydothermus hydrogenoformans (strain ATCC BAA-161 / DSM 6008 / Z-2901).